The chain runs to 207 residues: Holliday junction branch migration complex subunit RuvA (207 aa).

Residues 1–64 (MIGLINGQVQ…EDAQLLYGFI (64 aa)) are domain I. The interval 65 to 143 (DRKERDVFRQ…NIEVDSSHLE (79 aa)) is domain II. The flexible linker stretch occupies residues 144-152 (FAMQPAPIS). Residues 153-207 (AEGSIIAEVEGALISLGYKEREAQQAIKAAKSNGETFADTQSLLKATLQQFQSFK) form a domain III region.

Belongs to the RuvA family. Homotetramer. Forms an RuvA(8)-RuvB(12)-Holliday junction (HJ) complex. HJ DNA is sandwiched between 2 RuvA tetramers; dsDNA enters through RuvA and exits via RuvB. An RuvB hexamer assembles on each DNA strand where it exits the tetramer. Each RuvB hexamer is contacted by two RuvA subunits (via domain III) on 2 adjacent RuvB subunits; this complex drives branch migration. In the full resolvosome a probable DNA-RuvA(4)-RuvB(12)-RuvC(2) complex forms which resolves the HJ.

It localises to the cytoplasm. The RuvA-RuvB-RuvC complex processes Holliday junction (HJ) DNA during genetic recombination and DNA repair, while the RuvA-RuvB complex plays an important role in the rescue of blocked DNA replication forks via replication fork reversal (RFR). RuvA specifically binds to HJ cruciform DNA, conferring on it an open structure. The RuvB hexamer acts as an ATP-dependent pump, pulling dsDNA into and through the RuvAB complex. HJ branch migration allows RuvC to scan DNA until it finds its consensus sequence, where it cleaves and resolves the cruciform DNA. This Psychrobacter cryohalolentis (strain ATCC BAA-1226 / DSM 17306 / VKM B-2378 / K5) protein is Holliday junction branch migration complex subunit RuvA.